The sequence spans 410 residues: Serine hydroxymethyltransferase (410 aa).

Residues L119 and 123–125 (GHL) each bind (6S)-5,6,7,8-tetrahydrofolate. At K228 the chain carries N6-(pyridoxal phosphate)lysine. A (6S)-5,6,7,8-tetrahydrofolate-binding site is contributed by 351–353 (SPF).

The protein belongs to the SHMT family. In terms of assembly, homodimer. Pyridoxal 5'-phosphate is required as a cofactor.

Its subcellular location is the cytoplasm. The catalysed reaction is (6R)-5,10-methylene-5,6,7,8-tetrahydrofolate + glycine + H2O = (6S)-5,6,7,8-tetrahydrofolate + L-serine. Its pathway is one-carbon metabolism; tetrahydrofolate interconversion. It functions in the pathway amino-acid biosynthesis; glycine biosynthesis; glycine from L-serine: step 1/1. Functionally, catalyzes the reversible interconversion of serine and glycine with tetrahydrofolate (THF) serving as the one-carbon carrier. This reaction serves as the major source of one-carbon groups required for the biosynthesis of purines, thymidylate, methionine, and other important biomolecules. Also exhibits THF-independent aldolase activity toward beta-hydroxyamino acids, producing glycine and aldehydes, via a retro-aldol mechanism. This is Serine hydroxymethyltransferase from Clostridium perfringens (strain 13 / Type A).